A 341-amino-acid polypeptide reads, in one-letter code: MPGPLLKTLQGENISRRPIWLMRQAGRYLPEYRELRAEKGGFLALVYDTDAAAEVTVQPIRRFGFDGAILFSDILIVPYAMGQDLQFLAGEGPHLSPRLLDAALNSLVAVPGRLSPIYETVAKVKAQLSPETTLLGFAGSPWTVATYMVAGEGSRDHHDTRALAYRDPSAFQAIIDAITEVTIEYLSGQVEAGAEGLQLFDSWSGSLAPAEFERWVIAPNARIASAMQQRYPHVPVIGFPKGAGEKLSAYARETGVNAVGVDETIDPLWAARELPANMPVQGNLDPLLLLSGGPELERQTIRVLEAFADRPHVFNLGHGIGQHTPIENVEALLKIVRGWSR.

Substrate-binding positions include 23-27 (RQAGR), Asp-73, Tyr-147, Ser-202, and His-318.

This sequence belongs to the uroporphyrinogen decarboxylase family. As to quaternary structure, homodimer.

It localises to the cytoplasm. The enzyme catalyses uroporphyrinogen III + 4 H(+) = coproporphyrinogen III + 4 CO2. The protein operates within porphyrin-containing compound metabolism; protoporphyrin-IX biosynthesis; coproporphyrinogen-III from 5-aminolevulinate: step 4/4. In terms of biological role, catalyzes the decarboxylation of four acetate groups of uroporphyrinogen-III to yield coproporphyrinogen-III. The polypeptide is Uroporphyrinogen decarboxylase (Novosphingobium aromaticivorans (strain ATCC 700278 / DSM 12444 / CCUG 56034 / CIP 105152 / NBRC 16084 / F199)).